A 264-amino-acid polypeptide reads, in one-letter code: Thiazole synthase (264 aa).

The active-site Schiff-base intermediate with DXP is the Lys106. 1-deoxy-D-xylulose 5-phosphate is bound by residues Gly167, 193–194 (AG), and 215–216 (NS).

This sequence belongs to the ThiG family. In terms of assembly, homotetramer. Forms heterodimers with either ThiH or ThiS.

It localises to the cytoplasm. It catalyses the reaction [ThiS sulfur-carrier protein]-C-terminal-Gly-aminoethanethioate + 2-iminoacetate + 1-deoxy-D-xylulose 5-phosphate = [ThiS sulfur-carrier protein]-C-terminal Gly-Gly + 2-[(2R,5Z)-2-carboxy-4-methylthiazol-5(2H)-ylidene]ethyl phosphate + 2 H2O + H(+). It participates in cofactor biosynthesis; thiamine diphosphate biosynthesis. Functionally, catalyzes the rearrangement of 1-deoxy-D-xylulose 5-phosphate (DXP) to produce the thiazole phosphate moiety of thiamine. Sulfur is provided by the thiocarboxylate moiety of the carrier protein ThiS. In vitro, sulfur can be provided by H(2)S. The sequence is that of Thiazole synthase from Pseudomonas putida (strain W619).